A 203-amino-acid polypeptide reads, in one-letter code: Putative zinc finger protein 876 (203 aa).

C2H2-type zinc fingers lie at residues 63-85 (YTCE…KNIH), 91-113 (YKCE…KRIH), 119-141 (YKCE…KKIH), and 147-169 (YKCK…TNIH). The C2H2-type 5; degenerate zinc finger occupies 175 to 197 (YTCEECGKDFTWSSTLTVHQRIQ).

This sequence belongs to the krueppel C2H2-type zinc-finger protein family.

Its subcellular location is the nucleus. In terms of biological role, may be involved in transcriptional regulation. This Homo sapiens (Human) protein is Putative zinc finger protein 876 (ZNF876P).